Consider the following 405-residue polypeptide: L-rhamnonate dehydratase (405 aa).

Positions 33 and 59 each coordinate substrate. Mg(2+) contacts are provided by aspartate 226, glutamate 252, and glutamate 280. The active-site Proton acceptor is the histidine 329. Glutamate 349 contributes to the substrate binding site.

The protein belongs to the mandelate racemase/muconate lactonizing enzyme family. RhamD subfamily. As to quaternary structure, homooctamer; tetramer of dimers. Requires Mg(2+) as cofactor.

It carries out the reaction L-rhamnonate = 2-dehydro-3-deoxy-L-rhamnonate + H2O. Its function is as follows. Catalyzes the dehydration of L-rhamnonate to 2-keto-3-deoxy-L-rhamnonate (KDR). This is L-rhamnonate dehydratase from Salmonella paratyphi C (strain RKS4594).